The following is an 886-amino-acid chain: Peptidyl-lysine N-acetyltransferase PatZ (886 aa).

In terms of domain architecture, ATP-grasp spans 487 to 523 (QPILQAYGMNTLPTWIASDSTEAVHIAEQIGYPVALK). An N-acetyltransferase domain is found at 726 to 881 (CLFRPILPED…GIVGLTLNLA (156 aa)).

This sequence in the N-terminal section; belongs to the acetate CoA ligase alpha subunit family. It in the central section; belongs to the acetate CoA ligase beta subunit family. Stable tetramer in solution. Oligomerizes to an octameric form by autoacetylation. Post-translationally, autoacetylated. Deacetylated by CobB.

It catalyses the reaction L-lysyl-[protein] + acetyl-CoA = N(6)-acetyl-L-lysyl-[protein] + CoA + H(+). Its function is as follows. Catalyzes the acetyl-CoA-dependent acetylation of lysine residues of a large number of target proteins. Acetylates RNase R in exponential phase cells and RNase II. Required for the glucose-dependent acetylation on multiple lysines of alpha, beta and beta' RNAP subunits. Also acetylates acetyl-coenzyme A synthetase (Acs) and the chromosomal replication initiator protein DnaA, and inhibits their activity. Overexpression leads to the acetylation of a large number of additional proteins and inhibits motility. The protein is Peptidyl-lysine N-acetyltransferase PatZ of Escherichia coli (strain K12).